Here is a 1082-residue protein sequence, read N- to C-terminus: Protein argonaute 1A (1082 aa).

Disordered stretches follow at residues 17 to 148 and 187 to 208; these read MMRK…ASQD and GQSP…VRFP. Polar residues predominate over residues 29–38; the sequence is GESSGTQQAT. Positions 72–100 are enriched in gly residues; the sequence is GRGGGQHQGRGGRYQGRGGPTSHQPGGGP. The PAZ domain maps to 420–533; sequence PVIDFVAQLL…LPMEVCKIVE (114 aa). The region spanning 709 to 1030 is the Piwi domain; it reads LLIAILPDNN…AAFRARFYME (322 aa). The segment at 1036–1065 is disordered; sequence SGSMASGAHTRGGGPLPGARSTKPAGNVAV.

This sequence belongs to the argonaute family. Ago subfamily.

Its function is as follows. Probably involved in the RNA silencing pathway. May bind to short RNAs such as microRNAs (miRNAs) or short interfering RNAs (siRNAs), and represses the translation of mRNAs which are complementary to them. The protein is Protein argonaute 1A (AGO1A) of Oryza sativa subsp. japonica (Rice).